The sequence spans 429 residues: GTPase Obg (429 aa).

Residues 1-158 (MFVDQVKIYV…RNVQLELKVL (158 aa)) enclose the Obg domain. A disordered region spans residues 124 to 145 (RGNKRFATPANPAPELSENGEP). In terms of domain architecture, OBG-type G spans 159-329 (ADVGLVGFPS…LLLAIADKLE (171 aa)). GTP-binding positions include 165–172 (GFPSVGKS), 190–194 (FTTIV), 212–215 (DLPG), 282–285 (NKMD), and 310–312 (SAV). Mg(2+)-binding residues include serine 172 and threonine 192. One can recognise an OCT domain in the interval 351-429 (KYVAEEPDFE…LLDYEFEFMD (79 aa)).

It belongs to the TRAFAC class OBG-HflX-like GTPase superfamily. OBG GTPase family. Monomer. It depends on Mg(2+) as a cofactor.

It is found in the cytoplasm. In terms of biological role, an essential GTPase which binds GTP, GDP and possibly (p)ppGpp with moderate affinity, with high nucleotide exchange rates and a fairly low GTP hydrolysis rate. Plays a role in control of the cell cycle, stress response, ribosome biogenesis and in those bacteria that undergo differentiation, in morphogenesis control. The protein is GTPase Obg of Listeria monocytogenes serotype 4b (strain F2365).